A 1482-amino-acid polypeptide reads, in one-letter code: Glutamate receptor ionotropic, NMDA 2B (1482 aa).

A signal peptide spans 1-26; that stretch reads MKPSAECCSPKFWLVLAVLAVSGSKA. Residues 27–557 are Extracellular-facing; that stretch reads RSQKSAPSIG…SAFLEPFSAD (531 aa). N-linked (GlcNAc...) asparagine glycosylation occurs at asparagine 74. Cysteines 86 and 321 form a disulfide. Residues histidine 127 and glutamate 284 each coordinate Zn(2+). Asparagine 341, asparagine 348, asparagine 444, and asparagine 491 each carry an N-linked (GlcNAc...) asparagine glycan. 2 disulfide bridges follow: cysteine 429/cysteine 456 and cysteine 436/cysteine 457. 2 residues coordinate L-glutamate: threonine 514 and arginine 519. A glycan (N-linked (GlcNAc...) asparagine) is linked at asparagine 542. A helical transmembrane segment spans residues 558-576; sequence VWVMMFVMLLIVSAVAVFV. Residues 577 to 603 are Cytoplasmic-facing; the sequence is FEYFSPVGYNRCLADGREPGGPSFTIG. An intramembrane region (discontinuously helical) is located at residues 604-623; sequence KAIWLLWGLVFNNSVPVQNP. The interval 604–623 is pore-forming; it reads KAIWLLWGLVFNNSVPVQNP. Residues 624–630 lie on the Cytoplasmic side of the membrane; the sequence is KGTTSKI. Residues 631–646 traverse the membrane as a helical segment; the sequence is MVSVWAFFAVIFLASY. Residues 647–817 are Extracellular-facing; the sequence is TANLAAFMIQ…VMSSQLDIDN (171 aa). N-linked (GlcNAc...) asparagine glycosylation is present at asparagine 688. Residues 690 to 691 and aspartate 732 each bind L-glutamate; that span reads ST. Residues cysteine 746 and cysteine 801 are joined by a disulfide bond. The helical transmembrane segment at 818–837 threads the bilayer; sequence MAGVFYMLGAAMALSLITFI. Residues 838-1482 are Cytoplasmic-facing; that stretch reads CEHLFYWQFR…EKLSSIESDV (645 aa). Residues serine 882, serine 886, serine 917, and serine 920 each carry the phosphoserine modification. Phosphotyrosine is present on residues tyrosine 962 and tyrosine 1039. 3 positions are modified to phosphoserine: serine 1058, serine 1061, and serine 1064. A disordered region spans residues 1074–1097; it reads EGNAAKRRKQQYKDSLKKRPASAK. Phosphotyrosine is present on residues tyrosine 1109 and tyrosine 1133. The residue at position 1143 (serine 1143) is a Phosphoserine. Tyrosine 1155 is subject to Phosphotyrosine. Residues 1162-1194 form a disordered region; it reads FKRDSVSGGGPCTNRSHLKHGTGDKHGVVGGVP. Phosphoserine occurs at positions 1255 and 1259. Over residues 1266–1277 the composition is skewed to low complexity; it reads PAAPVAVSSNAS. The disordered stretch occupies residues 1266–1301; that stretch reads PAAPVAVSSNASTTKYPQSPTNSKAQKKNRNKLRRQ. The span at 1278–1289 shows a compositional bias: polar residues; that stretch reads TTKYPQSPTNSK. A compositionally biased stretch (basic residues) spans 1290–1301; the sequence is AQKKNRNKLRRQ. Residues 1292–1304 are interaction with DAPK1; it reads KKNRNKLRRQHSY. Position 1303 is a phosphoserine; by DAPK1 (serine 1303). Tyrosine 1472 is subject to Phosphotyrosine. The short motif at 1480-1482 is the PDZ-binding element; it reads SDV.

The protein belongs to the glutamate-gated ion channel (TC 1.A.10.1) family. NR2B/GRIN2B subfamily. Heterotetramer. Forms heterotetrameric channels composed of two GluN1/zeta subunits (GRIN1), and two identical GluN2/epsilon subunits (GRIN2A, GRIN2B, GRIN2C or GRIN2D) or GluN3 subunits (GRIN3A or GRIN3B) (in vitro). Can also form heterotetrameric channels that contain at least two GluN1 subunits and at least two different GluN2 subunits (or a combination of one GluN2 and one GluN3 subunits) (in vitro). In vivo, the subunit composition may depend on the expression levels of the different subunits. Found in a complex with GRIN1, GRIN3A and PPP2CB. Interacts with MAGI3. Interacts with HIP1 and NETO1. Interacts with PDZ domains of PATJ, DLG3 and DLG4. Interacts with DAPK1. Found in a complex with GRIN1 and PRR7. Interacts with PRR7. Interacts with CAMK2A. Interacts with ARC; preventing ARC oligomerization. Interacts with TMEM25. Interacts (via the extreme C-terminus) with FRMPD2 (via the second PDZ domain); the interaction is direct and is likely to promote NMDAR-mediated neural signal transmission. GRIN2A binds FRMPD2 with lower affinity than GRIN2B. Interacts with FAM81A; the interaction facilitates condensate formation via liquid-liquid phase separation. Phosphorylated on tyrosine residues. Phosphorylation at Ser-1303 by DAPK1 enhances synaptic NMDA receptor channel activity. In terms of tissue distribution, detected in brain (at protein level). Detected throughout the brain, and in brain stem trigeminal nucleus. Detected in forebrain.

Its subcellular location is the cell membrane. The protein resides in the postsynaptic cell membrane. It localises to the cell projection. It is found in the dendrite. The protein localises to the late endosome. Its subcellular location is the lysosome. The protein resides in the cytoplasm. It localises to the cytoskeleton. It catalyses the reaction Ca(2+)(in) = Ca(2+)(out). The catalysed reaction is Na(+)(in) = Na(+)(out). The enzyme catalyses K(+)(in) = K(+)(out). Its function is as follows. Component of N-methyl-D-aspartate (NMDA) receptors (NMDARs) that function as heterotetrameric, ligand-gated cation channels with high calcium permeability and voltage-dependent block by Mg(2+). Participates in synaptic plasticity for learning and memory formation by contributing to the long-term depression (LTD) of hippocampus membrane currents. Channel activation requires binding of the neurotransmitter L-glutamate to the GluN2 subunit, glycine or D-serine binding to the GluN1 subunit, plus membrane depolarization to eliminate channel inhibition by Mg(2+). NMDARs mediate simultaneously the potasium efflux and the influx of calcium and sodium. Each GluN2 subunit confers differential attributes to channel properties, including activation, deactivation and desensitization kinetics, pH sensitivity, Ca2(+) permeability, and binding to allosteric modulators. In concert with DAPK1 at extrasynaptic sites, acts as a central mediator for stroke damage. Its phosphorylation at Ser-1303 by DAPK1 enhances synaptic NMDA receptor channel activity inducing injurious Ca2+ influx through them, resulting in an irreversible neuronal death. This Mus musculus (Mouse) protein is Glutamate receptor ionotropic, NMDA 2B.